A 37-amino-acid polypeptide reads, in one-letter code: Large ribosomal subunit protein bL36 (37 aa).

The protein belongs to the bacterial ribosomal protein bL36 family.

The sequence is that of Large ribosomal subunit protein bL36 from Pelotomaculum thermopropionicum (strain DSM 13744 / JCM 10971 / SI).